A 159-amino-acid polypeptide reads, in one-letter code: Probable chemoreceptor glutamine deamidase CheD 2 (159 aa).

Belongs to the CheD family.

It carries out the reaction L-glutaminyl-[protein] + H2O = L-glutamyl-[protein] + NH4(+). Functionally, probably deamidates glutamine residues to glutamate on methyl-accepting chemotaxis receptors (MCPs), playing an important role in chemotaxis. The sequence is that of Probable chemoreceptor glutamine deamidase CheD 2 from Anaeromyxobacter dehalogenans (strain 2CP-C).